The primary structure comprises 967 residues: MSSKSYYTWKYPDIPENVESMLAELNNSLVVVGVIGRSRGPQANKMSAFDMRPNKLHEPADGQILCYYKPGTNTLMLHFETTYDEAVLSQQLLSQTSIDFDNFYYRMRSRFVRNMLLALHVCHIVVYVDTAEIFDTTLVTICQLLKYVREQHVLEFLPQMLHETSVGLMLGDRARPCTPRMLFLFENYPRDEEKTRDHISSYEFKTEDQIYHLLRQYNILTNNVNTSLVALPNNKQFVFYNAHEELHPDQLSHAIEALNTTMNKPDAKEEDEDLDIISLAPFEGFVKPFGADYKTRDSKELDYKKNHTAWHFLQRHVQDALQGYFDEGSFKLLTQTPQYQLLSARDWHSCMAEIYRLLIQNVHDANYVTDNTNYQAYLRELNESLNYEKKFWCHLCELGLKKGVSAYRNAAPAIYGSATHNQLLADATLAFEEEGRGPYVEMALAKLSDVCLKYWHDGRQQCEQLSLRGHPCTLPKDLAHDKHSSGIVHISSCNCGRTQGRREDPFTLRQANYDYYEQLAVMCNLCVKVKKFQFPLFTPSISDYRAAAFEAAFPLLLASKNRLEPAVQGDSDLDAEAADELYSQPIKAAEPAPQKQLQTLGDCCSQPLSATYGSDLNMSIAGFGDSLNEGEDADADADSPEIRSQICSSGQSSRSRSNSSSSDTSSANTENELVLQLKERSDQKNATEALSESCPESQSVASMPELVSTTEYLPGLVHMCSACELLPLFPSWSLACVGPSSIYSHNTGLQEHFQSGFLSGANFLLPWDVHVRLLQPHHKHPPLQQMGKKNQRYRKQGDRLALKIFVGFEYECSRGHRFMMCSPDRVLRGGADIERDTCSKLVNNNMPLYFPCPCRGQVSFLAQLMRIHVVTPKAPVNIIVDPKVRVGKYTFTLGCTVLPRLSQSAYWILRFPYVYQGDNVLIAPPAKFEPDDPFASGCLLAGMFGIAETDTTDAIQSAGAPLNFTRL.

The tract at residues 627–702 (LNEGEDADAD…SCPESQSVAS (76 aa)) is disordered. The segment covering 628–639 (NEGEDADADADS) has biased composition (acidic residues). Residues 643-666 (RSQICSSGQSSRSRSNSSSSDTSS) show a composition bias toward low complexity. Over residues 686–702 (ATEALSESCPESQSVAS) the composition is skewed to polar residues.

The protein belongs to the SMG8 family.

Its function is as follows. Involved in nonsense-mediated decay (NMD) of mRNAs containing premature stop codons. Probable component of kinase complex containing nonC and recruited to stalled ribosomes. This is Nonsense-mediated mRNA decay factor SMG8 from Drosophila mojavensis (Fruit fly).